The following is a 188-amino-acid chain: Protein GrpE (188 aa).

A disordered region spans residues Met-1–Glu-24.

The protein belongs to the GrpE family. As to quaternary structure, homodimer.

It localises to the cytoplasm. In terms of biological role, participates actively in the response to hyperosmotic and heat shock by preventing the aggregation of stress-denatured proteins, in association with DnaK and GrpE. It is the nucleotide exchange factor for DnaK and may function as a thermosensor. Unfolded proteins bind initially to DnaJ; upon interaction with the DnaJ-bound protein, DnaK hydrolyzes its bound ATP, resulting in the formation of a stable complex. GrpE releases ADP from DnaK; ATP binding to DnaK triggers the release of the substrate protein, thus completing the reaction cycle. Several rounds of ATP-dependent interactions between DnaJ, DnaK and GrpE are required for fully efficient folding. The chain is Protein GrpE from Hyphomonas neptunium (strain ATCC 15444).